The primary structure comprises 421 residues: UDP-N-acetylglucosamine 1-carboxyvinyltransferase (421 aa).

Residue 22-23 (KN) participates in phosphoenolpyruvate binding. Position 93 (R93) interacts with UDP-N-acetyl-alpha-D-glucosamine. The active-site Proton donor is C117. 2-(S-cysteinyl)pyruvic acid O-phosphothioketal is present on C117. Residues 122–126 (RPVDL), D308, and I330 each bind UDP-N-acetyl-alpha-D-glucosamine.

The protein belongs to the EPSP synthase family. MurA subfamily.

It localises to the cytoplasm. The catalysed reaction is phosphoenolpyruvate + UDP-N-acetyl-alpha-D-glucosamine = UDP-N-acetyl-3-O-(1-carboxyvinyl)-alpha-D-glucosamine + phosphate. The protein operates within cell wall biogenesis; peptidoglycan biosynthesis. In terms of biological role, cell wall formation. Adds enolpyruvyl to UDP-N-acetylglucosamine. In Pseudomonas fluorescens (strain ATCC BAA-477 / NRRL B-23932 / Pf-5), this protein is UDP-N-acetylglucosamine 1-carboxyvinyltransferase.